The following is a 512-amino-acid chain: 2,3-bisphosphoglycerate-independent phosphoglycerate mutase (512 aa).

Residues aspartate 11 and serine 61 each contribute to the Mn(2+) site. Catalysis depends on serine 61, which acts as the Phosphoserine intermediate. Residues histidine 122, 152–153 (RD), arginine 184, arginine 190, 259–262 (RADR), and lysine 332 contribute to the substrate site. Mn(2+) is bound by residues aspartate 399, histidine 403, aspartate 440, histidine 441, and histidine 459.

It belongs to the BPG-independent phosphoglycerate mutase family. In terms of assembly, monomer. Mn(2+) serves as cofactor.

The catalysed reaction is (2R)-2-phosphoglycerate = (2R)-3-phosphoglycerate. It participates in carbohydrate degradation; glycolysis; pyruvate from D-glyceraldehyde 3-phosphate: step 3/5. Its function is as follows. Catalyzes the interconversion of 2-phosphoglycerate and 3-phosphoglycerate. This chain is 2,3-bisphosphoglycerate-independent phosphoglycerate mutase, found in Francisella tularensis subsp. holarctica (strain FTNF002-00 / FTA).